We begin with the raw amino-acid sequence, 361 residues long: MGYISLALVALLVFFASPVVLADDITPIPADRAQIPQWFMANVKPFSQRRGTLDPELEAAEASRRVIIVNQNGGGDFKTINAAIKSIPLANKNRVIIKLAPGIYHEKVTVDVGRPYVTLLGKPGAETNLTYAGTAAKYGTVESATLIVWATNFLAANLNIINTSPMPKPGTQGQALAMRINGDKAAFYNCRFYGFQDTLCDDRGNHFFKNCYIEGTYDFIFGRGASLYLTTQLHAVGDGLRVIAAHNRQSTTEQNGYSFVHCKVTGVGTGIYLGRAWMSHPKVVYSYTEMSSVVNPSGWQENRVRAHDKTVFYGEYMCTGPGSHKAKRVAHTQDIDNKEASQFLTLGYIKGSKWLLPPPAY.

The N-terminal stretch at 1–22 is a signal peptide; it reads MGYISLALVALLVFFASPVVLA. The N-linked (GlcNAc...) asparagine glycan is linked to Asn128. A substrate-binding site is contributed by Gln174. Asp197 acts as the Proton donor in catalysis. Asp218 serves as the catalytic Nucleophile. 2 residues coordinate substrate: Arg275 and Trp277.

Belongs to the pectinesterase family. In terms of tissue distribution, expressed in flower buds.

It is found in the secreted. It localises to the cell wall. It carries out the reaction [(1-&gt;4)-alpha-D-galacturonosyl methyl ester](n) + n H2O = [(1-&gt;4)-alpha-D-galacturonosyl](n) + n methanol + n H(+). It functions in the pathway glycan metabolism; pectin degradation; 2-dehydro-3-deoxy-D-gluconate from pectin: step 1/5. Acts in the modification of cell walls via demethylesterification of cell wall pectin. This is Probable pectinesterase 49 (PME49) from Arabidopsis thaliana (Mouse-ear cress).